The chain runs to 149 residues: Transcriptional repressor NrdR (149 aa).

The segment at 3 to 34 (CPFCSAVDTKVIDSRLVGDGSQVRRRRQCLVC) is a zinc-finger region. The ATP-cone domain occupies 49 to 139 (PRVVKSNGVR…VYRSFEDVRE (91 aa)).

It belongs to the NrdR family. The cofactor is Zn(2+).

Its function is as follows. Negatively regulates transcription of bacterial ribonucleotide reductase nrd genes and operons by binding to NrdR-boxes. The chain is Transcriptional repressor NrdR from Edwardsiella ictaluri (strain 93-146).